The sequence spans 58 residues: Conotoxin Leo-T2 (58 aa).

An N-terminal signal peptide occupies residues 1–22 (MRCLPVFIILPLLIPSAPSVDA). The propeptide occupies 23–47 (QPMTEDDVPLASFHEQTLQELWNKR).

The protein belongs to the conotoxin T superfamily. Contains 2 disulfide bonds that can be either 'C1-C3, C2-C4' or 'C1-C4, C2-C3', since these disulfide connectivities have been observed for conotoxins with cysteine framework V (for examples, see AC P0DQQ7 and AC P81755). In terms of tissue distribution, expressed by the venom duct.

Its subcellular location is the secreted. The sequence is that of Conotoxin Leo-T2 from Conus leopardus (Leopard cone).